The chain runs to 208 residues: Imidazoleglycerol-phosphate dehydratase (208 aa).

The interval 1–22 (MTEDTETSSTGAGADDRTAAIS) is disordered.

This sequence belongs to the imidazoleglycerol-phosphate dehydratase family.

The protein localises to the cytoplasm. It carries out the reaction D-erythro-1-(imidazol-4-yl)glycerol 3-phosphate = 3-(imidazol-4-yl)-2-oxopropyl phosphate + H2O. It participates in amino-acid biosynthesis; L-histidine biosynthesis; L-histidine from 5-phospho-alpha-D-ribose 1-diphosphate: step 6/9. The protein is Imidazoleglycerol-phosphate dehydratase of Haloquadratum walsbyi (strain DSM 16790 / HBSQ001).